A 303-amino-acid polypeptide reads, in one-letter code: Methionyl-tRNA formyltransferase (303 aa).

110-113 lines the (6S)-5,6,7,8-tetrahydrofolate pocket; sequence SLLP.

This sequence belongs to the Fmt family.

The enzyme catalyses L-methionyl-tRNA(fMet) + (6R)-10-formyltetrahydrofolate = N-formyl-L-methionyl-tRNA(fMet) + (6S)-5,6,7,8-tetrahydrofolate + H(+). Attaches a formyl group to the free amino group of methionyl-tRNA(fMet). The formyl group appears to play a dual role in the initiator identity of N-formylmethionyl-tRNA by promoting its recognition by IF2 and preventing the misappropriation of this tRNA by the elongation apparatus. This Ehrlichia ruminantium (strain Welgevonden) protein is Methionyl-tRNA formyltransferase.